We begin with the raw amino-acid sequence, 1291 residues long: 1-phosphatidylinositol 4,5-bisphosphate phosphodiesterase gamma-1 (1291 aa).

Ala-2 is modified (N-acetylalanine). The PH 1 domain maps to 27–142 (RSLEVGTVMT…WIRGLTWLME (116 aa)). Residues 152 to 187 (QIERWLRKQFYSVDRNREDRISAKDLKNMLSQVNYR) enclose the EF-hand domain. Ca(2+) contacts are provided by Asp-165, Asn-167, Glu-169, Arg-171, and Asp-176. Positions 320–464 (DTMNNPLSHY…LKRKILIKHK (145 aa)) constitute a PI-PLC X-box domain. Catalysis depends on residues His-335 and His-380. The region spanning 489–523 (SIKNGILYLEDPVNHEWYPHYFVLTSSKIYYSEET) is the PH 2; first part domain. Residue Tyr-506 is modified to Phosphotyrosine. The segment at 522–544 (ETSSDQGNEDEEEPKEASGSTEL) is disordered. 2 consecutive SH2 domains span residues 550–657 (WFHG…SEPV) and 668–756 (WYHA…RYPI). Position 771 is a phosphotyrosine; by SYK (Tyr-771). Tyr-775 and Tyr-783 each carry phosphotyrosine. Phosphotyrosine; by ITK, SYK and TXK is present on Tyr-783. The SH3 domain occupies 791 to 851 (TFKCAVKALF…PSNYVEEMVS (61 aa)). The region spanning 895-931 (FVFSISMASVAHWSLDVAADSQEELQDWVKKIREVAQ) is the PH 2; second part domain. In terms of domain architecture, PI-PLC Y-box spans 953–1070 (LSELVVYCRP…GYVLQPSVMR (118 aa)). Tyr-977 is modified (phosphotyrosine). The 124-residue stretch at 1071–1194 (DEAFDPFDKS…TGYRAVPLKN (124 aa)) folds into the C2 domain. 3 positions are modified to phosphoserine: Ser-1222, Ser-1228, and Ser-1249. Tyr-1254 carries the post-translational modification Phosphotyrosine. Ser-1264 carries the post-translational modification Phosphoserine. The segment at 1271-1291 (HFDGRDRRTPRRTRVNGDNRL) is disordered.

Interacts with AGAP2 via its SH3 domain. Interacts (via SH2 domain) with RET. Interacts with FLT1 (tyrosine-phosphorylated). Interacts (via SH2 domain) with FGFR1, FGFR2, FGFR3 and FGFR4 (phosphorylated). Interacts with LAT (phosphorylated) upon TCR activation. Interacts (via SH3 domain) with the Pro-rich domain of TNK1. Associates with BLNK, VAV1, GRB2 and NCK1 in a B-cell antigen receptor-dependent fashion. Interacts with CBLB in activated T-cells; which inhibits phosphorylation. Interacts with SHB. Interacts (via SH3 domain) with the Arg/Gly-rich-flanked Pro-rich domains of KHDRBS1/SAM68. This interaction is selectively regulated by arginine methylation of KHDRBS1/SAM68. Interacts with INPP5D/SHIP1, THEMIS and CLNK. Interacts with AXL, FLT4 and KIT. Interacts with RALGPS1. Interacts (via the SH2 domains) with VIL1 (phosphorylated at C-terminus tyrosine phosphorylation sites). Interacts (via SH2 domain) with PDGFRA and PDGFRB (tyrosine phosphorylated). Interacts with PIP5K1C. Interacts with NTRK1 and NTRK2 (phosphorylated upon ligand-binding). Interacts with SYK; activates PLCG1. Interacts with GRB2, LAT and THEMIS upon TCR activation in thymocytes. Interacts with TESPA1; the association is increased with prolonged stimulation of the TCR and may facilitate the assembly of the LAT signalosome. Interacts (via C-terminal proline-rich domain (PRD)) with PLCG1 (via SH3 domain); this interaction leads to guanine nucleotide exchange from PlCG1 to DNM1 and enhances DNM1-dependent endocytosis. The cofactor is Ca(2+). Ubiquitinated by CBLB in activated T-cells. In terms of processing, tyrosine phosphorylated in response to signaling via activated FLT3, KIT and PDGFRA. Tyrosine phosphorylated by activated FGFR1, FGFR2, FGFR3 and FGFR4. Tyrosine phosphorylated by activated FLT1 and KDR. Tyrosine phosphorylated by activated PDGFRB. The receptor-mediated activation of PLCG1 involves its phosphorylation by tyrosine kinases, in response to ligation of a variety of growth factor receptors and immune system receptors. For instance, SYK phosphorylates and activates PLCG1 in response to ligation of the B-cell receptor. May be dephosphorylated by PTPRJ. Phosphorylated by ITK and TXK on Tyr-783 upon TCR activation in T-cells.

It is found in the cell projection. The protein resides in the lamellipodium. It localises to the ruffle. The enzyme catalyses a 1,2-diacyl-sn-glycero-3-phospho-(1D-myo-inositol-4,5-bisphosphate) + H2O = 1D-myo-inositol 1,4,5-trisphosphate + a 1,2-diacyl-sn-glycerol + H(+). It carries out the reaction a 1,2-diacyl-sn-glycero-3-phospho-(1D-myo-inositol) + H2O = 1D-myo-inositol 1-phosphate + a 1,2-diacyl-sn-glycerol + H(+). With respect to regulation, activated by phosphorylation on tyrosine residues. Functionally, mediates the production of the second messenger molecules diacylglycerol (DAG) and inositol 1,4,5-trisphosphate (IP3). Plays an important role in the regulation of intracellular signaling cascades. Becomes activated in response to ligand-mediated activation of receptor-type tyrosine kinases, such as PDGFRA, PDGFRB, EGFR, FGFR1, FGFR2, FGFR3 and FGFR4. Plays a role in actin reorganization and cell migration. Guanine nucleotide exchange factor that binds the GTPase DNM1 and catalyzes the dissociation of GDP, allowing a GTP molecule to bind in its place, therefore enhancing DNM1-dependent endocytosis. This chain is 1-phosphatidylinositol 4,5-bisphosphate phosphodiesterase gamma-1, found in Bos taurus (Bovine).